The primary structure comprises 88 residues: Eclosion hormone (88 aa).

Residues 1 to 26 form the signal peptide; it reads MANKLTAVIVVALAVAFMVNLDYANC. 3 cysteine pairs are disulfide-bonded: Cys-40-Cys-64, Cys-44-Cys-60, and Cys-47-Cys-75.

Belongs to the insect eclosion hormone family.

Its subcellular location is the secreted. Its function is as follows. Neuropeptide that triggers the performance of ecdysis behaviors at the end of a molt. It triggers adult behavior patterns: larval, pupal and adult ecdysis, and plasticization during the molt. In Bombyx mori (Silk moth), this protein is Eclosion hormone.